The following is a 277-amino-acid chain: Trypsin-2 (277 aa).

An N-terminal signal peptide occupies residues methionine 1–cysteine 19. Residues alanine 20–arginine 50 constitute a propeptide, activation peptide. A Peptidase S1 domain is found at valine 51–glycine 276. A disulfide bond links cysteine 76 and cysteine 92. Residues histidine 91 and aspartate 136 each act as charge relay system in the active site. Disulfide bonds link cysteine 201–cysteine 217 and cysteine 228–cysteine 252. The active-site Charge relay system is serine 232.

The protein belongs to the peptidase S1 family. As to expression, midgut.

It localises to the secreted. The catalysed reaction is Preferential cleavage: Arg-|-Xaa, Lys-|-Xaa.. Its function is as follows. Major function may be to aid in digestion of the blood meal. The chain is Trypsin-2 (TRYP2) from Anopheles gambiae (African malaria mosquito).